The sequence spans 112 residues: Glutaredoxin-C6 (112 aa).

The Glutaredoxin domain maps to Leu-3 to Ala-103. Cys-23 and Cys-26 are oxidised to a cystine.

It belongs to the glutaredoxin family. CPYC subfamily. Post-translationally, the N-terminus is blocked. Expressed in aleurone layer.

The protein localises to the cytoplasm. Its function is as follows. Has a glutathione-disulfide oxidoreductase activity in the presence of NADPH and glutathione reductase. Reduces low molecular weight disulfides and proteins. Possesses thioltransferase, dehydroascorbate reductase and GSH-dependent peroxidase activities in vitro. This Oryza sativa subsp. japonica (Rice) protein is Glutaredoxin-C6 (GRXC6).